The sequence spans 87 residues: uncharacterized protein (87 aa).

This sequence to H.pylori HP0495/JHP0447.

This is an uncharacterized protein from Campylobacter jejuni subsp. jejuni serotype O:2 (strain ATCC 700819 / NCTC 11168).